Consider the following 247-residue polypeptide: OCIA domain-containing protein 1 (247 aa).

Positions 1 to 112 (MNGRADFREP…KKLENSPLGE (112 aa)) constitute an OCIA domain. Phosphoserine occurs at positions 108, 116, and 123. Disordered stretches follow at residues 113-153 (ALRS…ADNI) and 167-230 (SASM…MQER). 2 stretches are compositionally biased toward polar residues: residues 136–146 (SNVSGQSSFGT) and 168–177 (ASMNESTPTG). Basic and acidic residues-rich tracts occupy residues 192–210 (ESPK…KNRE) and 218–230 (HKTD…MQER). Ser193 is subject to Phosphoserine.

This sequence belongs to the OCIAD1 family. In terms of assembly, interacts with OCIAD2. Interacts with STAT3. In terms of tissue distribution, expressed at high levels in the brain and at lower levels in the heart, ovary, testis and kidney. Expression is strongest in embryonic stem cells and in the blood vessels.

It localises to the endosome. Maintains stem cell potency. Increases STAT3 phosphorylation and controls ERK phosphorylation. May act as a scaffold, increasing STAT3 recruitment onto endosomes. The polypeptide is OCIA domain-containing protein 1 (Mus musculus (Mouse)).